The chain runs to 242 residues: Cysteine-rich venom protein helothermine (242 aa).

The N-terminal stretch at 1 to 19 (MILLSLYLCLAAMLHQSEG) is a signal peptide. Residues 41–169 (DKHNNLRRIV…TYKYYQVCQY (129 aa)) form the SCP domain. Intrachain disulfides connect Cys77–Cys155, Cys94–Cys170, Cys150–Cys167, Cys189–Cys196, Cys192–Cys201, Cys205–Cys237, Cys214–Cys231, and Cys223–Cys235. One can recognise a ShKT domain in the interval 205–237 (CKQNDVYNNCPDLKKQVGCGHPIMKDCMATCKC).

It belongs to the CRISP family. In terms of tissue distribution, expressed by the venom gland.

Its subcellular location is the secreted. Functionally, alters a variety of ion channel activities, including voltage-gated potassium channels (Kv), voltage-gated calcium channels (L-, N-, and P-type) (Cav) and ryanodine receptors (RyR). Is toxic to mice (causes lethargy, partial paralysis of rear limbs and lowering of body temperature). The chain is Cysteine-rich venom protein helothermine from Heloderma horridum horridum (Mexican beaded lizard).